A 238-amino-acid polypeptide reads, in one-letter code: uncharacterized protein (238 aa).

Transmembrane regions (helical) follow at residues 19 to 39, 79 to 99, and 141 to 161; these read IVIEAFPGTGLVGSIAGFQII, IILFSDIIISPFKINGLAEFI, and YVEIFDFGVVGGMGGNLLIKC.

The protein resides in the cell membrane. This is an uncharacterized protein from Methanocaldococcus jannaschii (strain ATCC 43067 / DSM 2661 / JAL-1 / JCM 10045 / NBRC 100440) (Methanococcus jannaschii).